The chain runs to 623 residues: Chaperone protein DnaK (623 aa).

Phosphothreonine; by autocatalysis is present on threonine 197. The segment at 600-623 is disordered; sequence KKDENAGANGGNKKDDDVIDAEVE.

Belongs to the heat shock protein 70 family.

Its function is as follows. Acts as a chaperone. The polypeptide is Chaperone protein DnaK (Campylobacter concisus (strain 13826)).